The sequence spans 278 residues: Lectin 6 (278 aa).

The N-terminal stretch at Met1 to Ser23 is a signal peptide. N-linked (GlcNAc...) asparagine glycosylation is found at Asn116, Asn139, and Asn271.

It belongs to the leguminous lectin family.

Its function is as follows. May be involved in arbuscular mycorrhizal (AM) symbiosis with AM fungi. This is Lectin 6 from Medicago truncatula (Barrel medic).